A 540-amino-acid chain; its full sequence is Flavin-dependent halogenase ptaM (540 aa).

Positions 1–21 (MSVPAQTSVLIVGGGPAGSYA) are cleaved as a signal peptide. FAD-binding residues include Gly14, Ala17, and Glu47. 4 N-linked (GlcNAc...) asparagine glycosylation sites follow: Asn159, Asn192, Asn204, and Asn243. Positions 330 and 331 each coordinate chloride. N-linked (GlcNAc...) asparagine glycosylation is found at Asn480, Asn491, and Asn523.

It belongs to the flavin-dependent halogenase family.

It participates in secondary metabolite biosynthesis. In terms of biological role, flavin-dependent halogenase; part of the gene cluster that mediates the biosynthesis of pestheic acid, a diphenyl ether which is a biosynthetic precursor of the unique chloropupukeananes. The biosynthesis initiates from condensation of acetate and malonate units catalyzed by the non-reducing PKS ptaA. As the ptaA protein is TE/CLC domain-deficient, hydrolysis and Claisen cyclization of the polyketide could be catalyzed by ptaB containing a beta-lactamase domain. The ptaB protein might hydrolyze the thioester bond between the ACP of ptaA and the intermediate to release atrochrysone carboxylic acid, which is spontaneously dehydrated to form endocrocin anthrone. Endocrocin anthrone is then converted to endocrocin, catalyzed by the anthrone oxygenase ptaC. Spontaneous decarboxylation of endocrocin occurs to generate emodin. An O-methyltransferase (ptaH or ptaI) could methylate emodin to form physcion. PtaJ could then catalyze the oxidative cleavage of physcion, and rotation of the intermediate could then afford desmethylisosulochrin. PtaF, a putative NADH-dependent oxidoreductase, might also participate in the oxidative cleavage step. Desmethylisosulochrin is then transformed by another O-methyltransferase (ptaH or ptaI) to form isosulochrin. Chlorination of isosulochrin by ptaM in the cyclohexadienone B ring then produces chloroisosulochrin. PtaE is responsible for the oxidative coupling reactions of both benzophenones isosulochrin and chloroisosulochrin to RES-1214-1 and pestheic acid respectively, regardless of chlorination. In Pestalotiopsis fici (strain W106-1 / CGMCC3.15140), this protein is Flavin-dependent halogenase ptaM.